Reading from the N-terminus, the 251-residue chain is Imidazole glycerol phosphate synthase subunit HisF (251 aa).

Active-site residues include Asp-11 and Asp-130.

This sequence belongs to the HisA/HisF family. In terms of assembly, heterodimer of HisH and HisF.

It localises to the cytoplasm. It carries out the reaction 5-[(5-phospho-1-deoxy-D-ribulos-1-ylimino)methylamino]-1-(5-phospho-beta-D-ribosyl)imidazole-4-carboxamide + L-glutamine = D-erythro-1-(imidazol-4-yl)glycerol 3-phosphate + 5-amino-1-(5-phospho-beta-D-ribosyl)imidazole-4-carboxamide + L-glutamate + H(+). The protein operates within amino-acid biosynthesis; L-histidine biosynthesis; L-histidine from 5-phospho-alpha-D-ribose 1-diphosphate: step 5/9. In terms of biological role, IGPS catalyzes the conversion of PRFAR and glutamine to IGP, AICAR and glutamate. The HisF subunit catalyzes the cyclization activity that produces IGP and AICAR from PRFAR using the ammonia provided by the HisH subunit. The chain is Imidazole glycerol phosphate synthase subunit HisF from Parabacteroides distasonis (strain ATCC 8503 / DSM 20701 / CIP 104284 / JCM 5825 / NCTC 11152).